The primary structure comprises 307 residues: Transaldolase (307 aa).

Lys125 serves as the catalytic Schiff-base intermediate with substrate.

Belongs to the transaldolase family. Type 1 subfamily.

The protein resides in the cytoplasm. The enzyme catalyses D-sedoheptulose 7-phosphate + D-glyceraldehyde 3-phosphate = D-erythrose 4-phosphate + beta-D-fructose 6-phosphate. The protein operates within carbohydrate degradation; pentose phosphate pathway; D-glyceraldehyde 3-phosphate and beta-D-fructose 6-phosphate from D-ribose 5-phosphate and D-xylulose 5-phosphate (non-oxidative stage): step 2/3. Transaldolase is important for the balance of metabolites in the pentose-phosphate pathway. The sequence is that of Transaldolase from Pseudomonas aeruginosa (strain ATCC 15692 / DSM 22644 / CIP 104116 / JCM 14847 / LMG 12228 / 1C / PRS 101 / PAO1).